A 1498-amino-acid polypeptide reads, in one-letter code: ATP-binding cassette sub-family C member 6 (1498 aa).

Over 1 to 37 (MNRGRSMATPGEQCAGLRVWNQTEQEPAAYHLLSLCF) the chain is Extracellular. A glycan (N-linked (GlcNAc...) asparagine) is linked at Asn-21. The helical transmembrane segment at 38-58 (VRAASSWVPPMYLWVLGPIYL) threads the bilayer. Over 59–78 (LYIHRHGRCYLRMSHLFKTK) the chain is Cytoplasmic. The chain crosses the membrane as a helical span at residues 79-99 (MVLGLALILLYTFNVAVPLWR). Residues 100 to 104 (IHQGV) are Extracellular-facing. The chain crosses the membrane as a helical span at residues 105–125 (PQAPELLIHPTVWLTTMSFAT). Residues 126–137 (FLIHMERRKGVR) are Cytoplasmic-facing. Residues 138 to 155 (SSGVLFGYWLLCCILPGI) traverse the membrane as a helical segment. The Extracellular segment spans residues 156-173 (NTVQQASAGNFRQEPLHH). The chain crosses the membrane as a helical span at residues 174 to 194 (LATYLCLSLVVAELVLSCLVD). Residues 195 to 300 (QPPFFSEDSQ…RSQRGPLLRA (106 aa)) lie on the Cytoplasmic side of the membrane. Residues 301–321 (IWRVFRSTFLLGTLSLVISDA) traverse the membrane as a helical segment. Residues 309–592 (FLLGTLSLVI…LPFSVHCIVQ (284 aa)) form the ABC transmembrane type-1 1 domain. The Extracellular portion of the chain corresponds to 322 to 347 (FRFAVPKLLSLFLEFMGDRNSSAWTG). N-linked (GlcNAc...) asparagine glycosylation is present at Asn-341. Residues 348-368 (WLLAVLMFAAACLQTLFEQQH) form a helical membrane-spanning segment. Over 369–424 (MYRAKVLQMRLRTAITGLVYRKVLVLSSGSRKSSAAGDVVNLVSVDIQRLAESIIY) the chain is Cytoplasmic. Residues 425–445 (LNGLWLLFLWIFVCFVYLWQL) traverse the membrane as a helical segment. Residues 446-448 (LGP) are Extracellular-facing. Residues 449–469 (SALTAVAVFLSLLPLNFFITK) traverse the membrane as a helical segment. Residues 470-531 (KRGFHQEEQM…ALKTSTLLFS (62 aa)) lie on the Cytoplasmic side of the membrane. Residues 532 to 552 (VSLVSFQVSTFLVALVVFAVH) traverse the membrane as a helical segment. The Extracellular portion of the chain corresponds to 553–574 (TLVAEDNAMDAEKAFVTLTVLS). The helical transmembrane segment at 575-595 (ILNKAQAFLPFSVHCIVQARV) threads the bilayer. Over 596–934 (SFDRLAAFLC…VKTTIYLSYL (339 aa)) the chain is Cytoplasmic. The ABC transporter 1 domain maps to 627–851 (ISVHNGTFAW…NGALVGLLDG (225 aa)). 661 to 668 (GPVGAGKS) serves as a coordination point for ATP. A disordered region spans residues 855–910 (PAGTHDAATSDDLGGFPGGGRPTCRPDRPRPTEAAPVKGRSTSEVQMEASLDDPEA). Residues 935–955 (RAVGTPLCTYTLFLFLCQQVA) traverse the membrane as a helical segment. The 282-residue stretch at 942 to 1223 (CTYTLFLFLC…VVRSWTDLEN (282 aa)) folds into the ABC transmembrane type-1 2 domain. Topologically, residues 956 to 992 (SFSQGYWLSLWADDPVVDGRQMHAALRGWVFGLLGCL) are extracellular. Residues 993-1013 (QAIGLFASMAAVFLGGARASG) traverse the membrane as a helical segment. Residues 1014–1056 (LLFRSLLWDVARSPIGFFERTPVGNLLNRFSKETDTVDVDIPD) lie on the Cytoplasmic side of the membrane. A helical transmembrane segment spans residues 1057–1077 (KLRSLLTYAFGLLEVGLAVTM). Residue Ala-1078 is a topological domain, extracellular. Residues 1079–1099 (TPLAIVAILPLMVLYAGFQSL) traverse the membrane as a helical segment. The Cytoplasmic portion of the chain corresponds to 1100–1170 (YVATSCQLRR…VADRWLATNL (71 aa)). A helical membrane pass occupies residues 1171–1191 (ELLGNGLVFVAATCAVLSKAH). The Extracellular portion of the chain corresponds to 1192–1193 (LS). A helical transmembrane segment spans residues 1194–1214 (AGLVGFSVSAALQVTQTLQWV). The Cytoplasmic portion of the chain corresponds to 1215–1498 (VRSWTDLENS…YRLAHESGLA (284 aa)). The ABC transporter 2 domain maps to 1260–1494 (IEFRDFGLRH…KGLFYRLAHE (235 aa)). Residue Ser-1281 is modified to Phosphoserine. 1294–1301 (GRTGAGKS) lines the ATP pocket.

It belongs to the ABC transporter superfamily. ABCC family. Conjugate transporter (TC 3.A.1.208) subfamily. In terms of processing, glycosylated.

It is found in the basolateral cell membrane. The protein localises to the basal cell membrane. The catalysed reaction is an S-substituted glutathione(in) + ATP + H2O = an S-substituted glutathione(out) + ADP + phosphate + H(+). It catalyses the reaction leukotriene C4(in) + ATP + H2O = leukotriene C4(out) + ADP + phosphate + H(+). ATP-dependent transporter of the ATP-binding cassette (ABC) family that actively extrudes physiological compounds, and xenobiotics from cells. Mediates ATP-dependent transport of glutathione conjugates such as leukotriene-c4 (LTC4) and N-ethylmaleimide S-glutathione (NEM-GS) (in vitro), and an anionic cyclopentapeptide endothelin antagonist, BQ-123. May contribute to regulate the transport of organic compounds in testes across the blood-testis-barrier. Its function is as follows. Mediates the release of nucleoside triphosphates, predominantly ATP, into the circulation, where it is rapidly converted into AMP and the mineralization inhibitor inorganic pyrophosphate (PPi) by the ecto-enzyme ectonucleotide pyrophosphatase phosphodiesterase 1 (ENPP1), therefore playing a role in PPi homeostasis. This chain is ATP-binding cassette sub-family C member 6 (Abcc6), found in Mus musculus (Mouse).